A 271-amino-acid chain; its full sequence is Aquaporin-11 (271 aa).

Over 1 to 14 (MSALLGLRPEVQDT) the chain is Cytoplasmic. A helical transmembrane segment spans residues 15–35 (CISLGLMLLFVLFVGLARVIA). At 36-41 (RQQLHR) the chain is on the lumenal side. A helical membrane pass occupies residues 42–62 (PVVHAFVLEFLATFQLCCCTH). Residues 63 to 76 (ELQVLSEQDSAHPT) lie on the Cytoplasmic side of the membrane. The chain crosses the membrane as a helical span at residues 77–97 (WTLTLIYFFSLVHGLTLVGTA). Topologically, residues 98-166 (SNPCGVMMQM…NPIHTDMSKA (69 aa)) are lumenal. Positions 99 to 101 (NPC) match the NPC motif. Residues 167-187 (IIIEAICSFIFHSALLHFQEV) form a helical membrane-spanning segment. At 188-194 (RTKLRIH) the chain is on the cytoplasmic side. Residues 195-215 (LLAALITFLAYAGGSLTGALF) traverse the membrane as a helical segment. The short motif at 216-218 (NPA) is the NPA element. Over 216–234 (NPALALSLHFPCFDELFYK) the chain is Lumenal. A helical membrane pass occupies residues 235–255 (FFVVYWLAPSVGVLMMILMFS). The Cytoplasmic segment spans residues 256–271 (FFLPWLHNNQMTNKKE).

Belongs to the MIP/aquaporin (TC 1.A.8) family. AQP11/AQP12 subfamily. In terms of assembly, homodimer; disulfide-linked. Homotetramer. Can also form homomultimer. In terms of processing, not glycosylated. In terms of tissue distribution, highly expressed in the S1 proximal tubule segment,. Expressed in the testis, kidney, and liver. Weakly expressed in the heart, brain, and muscle. Highly expressed in the testis. Expressed in the proximal tubule of the cortex of 8-day-old mouse kidney. Expressed in retina specifically at retinal Mueller glial cells. Expressed in brain. Expressed abundantly at the choroid plexus but also expressed weakly in the parenchyma. Expressed at the capillary endothelium in the cerebral white matter. Expressed in adult testis, in the elongated spermatids (ES) and in residual bodies inside Sertoli cells.

It is found in the endoplasmic reticulum membrane. The protein resides in the cytoplasmic vesicle membrane. It localises to the cell membrane. It catalyses the reaction H2O(in) = H2O(out). It carries out the reaction glycerol(in) = glycerol(out). The enzyme catalyses H2O2(out) = H2O2(in). Its function is as follows. Channel protein that facilitates the transport of water, glycerol and hydrogen peroxide across membrane of cell or organelles guaranteeing intracellular homeostasis in several organes like liver, kidney and brain. In situation of stress, participates in endoplasmic reticulum (ER) homeostasis by regulating redox homeostasis through the transport of hydrogen peroxide across the endoplasmic reticulum membrane thereby regulating the oxidative stress through the NADPH oxidase 2 pathway. Plays a role by maintaining an environment suitable for translation or protein foldings in the ER lumen namely by participating in the PKD1 glycosylation processing resulting in regulation of PKD1 membrane trafficking thereby preventing the accumulation of unfolding protein in ER. Plays a role in the proximal tubule function by regulating its endosomal acidification. May play a role in postnatal kidney development. The protein is Aquaporin-11 of Mus musculus (Mouse).